The primary structure comprises 279 residues: NAD kinase (279 aa).

Residue D61 is the Proton acceptor of the active site. Residues 61 to 62, 138 to 139, K149, K166, D168, and 179 to 184 each bind NAD(+); these read DG, ND, and TGYSFS.

The protein belongs to the NAD kinase family. Requires a divalent metal cation as cofactor.

It localises to the cytoplasm. It catalyses the reaction NAD(+) + ATP = ADP + NADP(+) + H(+). Involved in the regulation of the intracellular balance of NAD and NADP, and is a key enzyme in the biosynthesis of NADP. Catalyzes specifically the phosphorylation on 2'-hydroxyl of the adenosine moiety of NAD to yield NADP. The chain is NAD kinase from Borreliella burgdorferi (strain ATCC 35210 / DSM 4680 / CIP 102532 / B31) (Borrelia burgdorferi).